The sequence spans 671 residues: BLOC-3 complex member HPS4 (671 aa).

Residues 269-286 (LQGSSVQYPPWDQSSPTQ) are compositionally biased toward polar residues. Disordered regions lie at residues 269–291 (LQGS…EDAW) and 417–497 (LADL…PSGR). Residues 467 to 477 (SALPRSSRSPD) are compositionally biased toward low complexity.

Component of the biogenesis of lysosome-related organelles complex-3 (or BLOC-3), a heterodimer of HPS1 and HPS4. HPS4 and the BLOC-3 complex interact with the GTP-bound form of RAB9B but not with the GDP-bound form of RAB9B. HPS4 and the BLOC-3 complex interact with the GTP-bound form of RAB9A but not with the GDP-bound form of RAB9A. HPS4 does not interact RAB4A and RAB7A. Highly expressed in heart, brain, liver and testis. Expressed at lower level in skeletal muscle.

In terms of biological role, component of the BLOC-3 complex, a complex that acts as a guanine exchange factor (GEF) for RAB32 and RAB38, promotes the exchange of GDP to GTP, converting them from an inactive GDP-bound form into an active GTP-bound form. The BLOC-3 complex plays an important role in the control of melanin production and melanosome biogenesis and promotes the membrane localization of RAB32 and RAB38. The protein is BLOC-3 complex member HPS4 (Hps4) of Mus musculus (Mouse).